A 61-amino-acid polypeptide reads, in one-letter code: Photosystem II reaction center protein K (61 aa).

The propeptide occupies 1–24 (MLNIFNLICICFNSALFSSSFLFA). A helical transmembrane segment spans residues 36–56 (IVDFMPVIPVLFFLLAFVWQA).

It belongs to the PsbK family. PSII is composed of 1 copy each of membrane proteins PsbA, PsbB, PsbC, PsbD, PsbE, PsbF, PsbH, PsbI, PsbJ, PsbK, PsbL, PsbM, PsbT, PsbX, PsbY, PsbZ, Psb30/Ycf12, at least 3 peripheral proteins of the oxygen-evolving complex and a large number of cofactors. It forms dimeric complexes.

The protein resides in the plastid. The protein localises to the chloroplast thylakoid membrane. In terms of biological role, one of the components of the core complex of photosystem II (PSII). PSII is a light-driven water:plastoquinone oxidoreductase that uses light energy to abstract electrons from H(2)O, generating O(2) and a proton gradient subsequently used for ATP formation. It consists of a core antenna complex that captures photons, and an electron transfer chain that converts photonic excitation into a charge separation. In Gossypium barbadense (Sea Island cotton), this protein is Photosystem II reaction center protein K.